Reading from the N-terminus, the 200-residue chain is Nascent polypeptide-associated complex subunit alpha (200 aa).

Over residues 1-19 the composition is skewed to basic and acidic residues; sequence MADPRIEELPDEETKKPTV. Disordered stretches follow at residues 1–52 and 120–165; these read MADP…SRNE and QQLA…EDKD. The segment covering 20-34 has biased composition (acidic residues); the sequence is EELDESSDEESDAEA. The 66-residue stretch at 49 to 114 folds into the NAC-A/B domain; the sequence is SRNEKKARKA…AKIEDLNASA (66 aa). Positions 127-143 are enriched in basic and acidic residues; that stretch reads AEHDHAGHTHDHKHEAA. Residues 144–160 show a composition bias toward acidic residues; the sequence is KEEEEEEDDGEEVDAEG. One can recognise a UBA domain in the interval 161–200; the sequence is IEDKDIELVMTQANVSRKKAIKALKENDNDIVNSIMALSV.

The protein belongs to the NAC-alpha family. As to quaternary structure, part of the nascent polypeptide-associated complex (NAC), consisting of EGD2 and EGD1. NAC associates with ribosomes via EGD1.

The protein localises to the cytoplasm. It localises to the nucleus. Functionally, component of the nascent polypeptide-associated complex (NAC), a dynamic component of the ribosomal exit tunnel, protecting the emerging polypeptides from interaction with other cytoplasmic proteins to ensure appropriate nascent protein targeting. The NAC complex also promotes mitochondrial protein import by enhancing productive ribosome interactions with the outer mitochondrial membrane and blocks the inappropriate interaction of ribosomes translating non-secretory nascent polypeptides with translocation sites in the membrane of the endoplasmic reticulum. EGD2 may also be involved in transcription regulation. The polypeptide is Nascent polypeptide-associated complex subunit alpha (EGD2) (Chaetomium globosum (strain ATCC 6205 / CBS 148.51 / DSM 1962 / NBRC 6347 / NRRL 1970) (Soil fungus)).